The following is a 158-amino-acid chain: Interleukin-17A (158 aa).

The N-terminal stretch at 1-25 is a signal peptide; sequence MSPGRASSVSLMLLLLLSLAATVKA. Asn-71 carries N-linked (GlcNAc...) asparagine glycosylation. Cystine bridges form between Cys-97/Cys-147 and Cys-102/Cys-149.

The protein belongs to the IL-17 family. Homodimer. Forms complexes with IL17RA and IL17RC receptors with 2:1 binding stoichiometry: two receptor chains for one interleukin molecule. IL17A homodimer preferentially drives the formation of IL17RA-IL17RC heterodimeric receptor complex. IL17A homodimer adopts an asymmetrical ternary structure with one IL17RA molecule, allowing for high affinity interactions of one IL17A monomer with one IL17RA molecule (via D1 and D2 domains), while disfavoring binding of a second IL17RA molecule on the other IL17A monomer. Heterodimer with IL17F. IL17A-IL17F forms complexes with IL17RA-IL17RC, but with lower affinity when compared to IL17A homodimer. IL17RA and IL17RC chains cannot distinguish between IL17A and IL17F molecules, potentially enabling the formation of topologically distinct complexes. In terms of tissue distribution, expressed by Th17 cell lineage (at protein level). The expression pattern reflects the differentiation state, with IL17A-IL17F heterodimers produced at higher levels than IL17A-IL17A and IL17F-IL17F dimers in fully differentiated Th17 cells. Expressed in innate lymphoid cells (at protein level). Expressed in gamma-delta T cell subsets (at protein level). Expressed in iNKT cells (at protein level).

The protein localises to the secreted. Functionally, effector cytokine of innate and adaptive immune system involved in antimicrobial host defense and maintenance of tissue integrity. Signals via IL17RA-IL17RC heterodimeric receptor complex, triggering homotypic interaction of IL17RA and IL17RC chains with TRAF3IP2 adapter. This leads to downstream TRAF6-mediated activation of NF-kappa-B and MAPkinase pathways ultimately resulting in transcriptional activation of cytokines, chemokines, antimicrobial peptides and matrix metalloproteinases, with potential strong immune inflammation. Plays an important role in connecting T cell-mediated adaptive immunity and acute inflammatory response to destroy extracellular bacteria and fungi. As a signature effector cytokine of T-helper 17 cells (Th17), primarily induces neutrophil activation and recruitment at infection and inflammatory sites. In airway epithelium, mediates neutrophil chemotaxis via induction of CXCL1 and CXCL5 chemokines. In secondary lymphoid organs, contributes to germinal center formation by regulating the chemotactic response of B cells to CXCL12 and CXCL13, enhancing retention of B cells within the germinal centers, B cell somatic hypermutation rate and selection toward plasma cells. Effector cytokine of a subset of gamma-delta T cells that functions as part of an inflammatory circuit downstream IL1B, TLR2 and IL23A-IL12B to promote neutrophil recruitment for efficient bacterial clearance. Effector cytokine of innate immune cells including invariant natural killer cell (iNKT) and group 3 innate lymphoid cells that mediate initial neutrophilic inflammation. Involved in the maintenance of the integrity of epithelial barriers during homeostasis and pathogen infection. Upon acute injury, has a direct role in epithelial barrier formation by regulating OCLN localization and tight junction biogenesis. As part of the mucosal immune response induced by commensal bacteria, enhances host's ability to resist pathogenic bacterial and fungal infections by promoting neutrophil recruitment and antimicrobial peptides release. In synergy with IL17F, mediates the production of antimicrobial beta-defensins DEFB1, DEFB103A, and DEFB104A by mucosal epithelial cells, limiting the entry of microbes through the epithelial barriers. Involved in antiviral host defense through various mechanisms. Enhances immunity against West Nile virus by promoting T cell cytotoxicity. May play a beneficial role in influenza A virus (H5N1) infection by enhancing B cell recruitment and immune response in the lung. Contributes to influenza A virus (H1N1) clearance by driving the differentiation of B-1a B cells, providing for production of virus-specific IgM antibodies at first line of host defense. The sequence is that of Interleukin-17A (Il17a) from Mus musculus (Mouse).